Here is a 331-residue protein sequence, read N- to C-terminus: Phosphate acyltransferase (331 aa).

Belongs to the PlsX family. As to quaternary structure, homodimer. Probably interacts with PlsY.

It localises to the cytoplasm. The catalysed reaction is a fatty acyl-[ACP] + phosphate = an acyl phosphate + holo-[ACP]. Its pathway is lipid metabolism; phospholipid metabolism. Its function is as follows. Catalyzes the reversible formation of acyl-phosphate (acyl-PO(4)) from acyl-[acyl-carrier-protein] (acyl-ACP). This enzyme utilizes acyl-ACP as fatty acyl donor, but not acyl-CoA. This chain is Phosphate acyltransferase, found in Lactococcus lactis subsp. lactis (strain IL1403) (Streptococcus lactis).